The following is a 353-amino-acid chain: Protein pelota homolog (353 aa).

It belongs to the eukaryotic release factor 1 family. Pelota subfamily. As to quaternary structure, monomer. It depends on a divalent metal cation as a cofactor.

It localises to the cytoplasm. In terms of biological role, may function in recognizing stalled ribosomes, interact with stem-loop structures in stalled mRNA molecules, and effect endonucleolytic cleavage of the mRNA. May play a role in the release non-functional ribosomes and degradation of damaged mRNAs. Has endoribonuclease activity. The polypeptide is Protein pelota homolog (Methanobrevibacter smithii (strain ATCC 35061 / DSM 861 / OCM 144 / PS)).